Reading from the N-terminus, the 215-residue chain is Heart- and neural crest derivatives-expressed protein 1 (215 aa).

2 disordered regions span residues 53–109 (APDF…RTES) and 166–198 (LKKA…EKRI). Positions 65-89 (AAAAATAYGPDARPGQSPGRLEALG) are enriched in low complexity. The segment covering 92-104 (LGRRKGSGPKKER) has biased composition (basic residues). The 53-residue stretch at 94–146 (RRKGSGPKKERRRTESINSAFAELRECIPNVPADTKLSKIKTLRLATSYIAYL) folds into the bHLH domain. Phosphothreonine; by PLK4 is present on Thr107. Phosphoserine; by PLK4 is present on Ser109.

As to quaternary structure, efficient DNA binding requires dimerization with another bHLH protein. Forms homodimers and heterodimers with TCF3 gene products E12 and E47, HAND2 and HEY1, HEY2 and HEYL (hairy-related transcription factors). Interacts with MDFIC. Interacts with SOX15; the interaction enhances HAND1-induced differentiation of trophoblast giant cells. Phosphorylation by PLK4 disrupts the interaction with MDFIC and leads to translocation into the nucleoplasm, allowing dimerization and transcription factor activity. As to expression, heart.

It is found in the nucleus. The protein resides in the nucleoplasm. The protein localises to the nucleolus. Functionally, transcription factor that plays an essential role in both trophoblast giant cell differentiation and in cardiac morphogenesis. Binds the DNA sequence 5'-NRTCTG-3' (non-canonical E-box). Acts as a transcriptional repressor of SOX15. In the adult, could be required for ongoing expression of cardiac-specific genes. The sequence is that of Heart- and neural crest derivatives-expressed protein 1 (HAND1) from Homo sapiens (Human).